We begin with the raw amino-acid sequence, 143 residues long: AP-2 complex subunit sigma (143 aa).

The protein belongs to the adaptor complexes small subunit family. Adaptor protein complex 2 (AP-2) is a heterotetramer composed of two large adaptins (alpha-type subunit APL3 and beta-type subunit APL1), a medium chain (mu-type subunit APM4) and a small adaptin (sigma-type subunit APS2).

The protein resides in the cell membrane. Its subcellular location is the membrane. It is found in the coated pit. Its function is as follows. Component of the adaptor complexes which link clathrin to receptors in coated vesicles. Clathrin-associated protein complexes are believed to interact with the cytoplasmic tails of membrane proteins, leading to their selection and concentration. The chain is AP-2 complex subunit sigma (APS2) from Gibberella zeae (strain ATCC MYA-4620 / CBS 123657 / FGSC 9075 / NRRL 31084 / PH-1) (Wheat head blight fungus).